We begin with the raw amino-acid sequence, 450 residues long: Pancreatic triacylglycerol lipase (450 aa).

3 disulfides stabilise this stretch: Cys-4–Cys-10, Cys-91–Cys-102, and Cys-91–Cys-104. The active-site Nucleophile is Ser-153. Residue Asn-167 is glycosylated (N-linked (GlcNAc...) asparagine). Asp-177 acts as the Charge relay system in catalysis. Glu-188, Arg-191, Asp-193, and Asp-196 together coordinate Ca(2+). Cys-238 and Cys-262 are disulfide-bonded. His-264 acts as the Charge relay system in catalysis. Cystine bridges form between Cys-286–Cys-297, Cys-300–Cys-305, and Cys-434–Cys-450. The PLAT domain maps to 339-450 (WRYKVSVTLS…EEVLLTLNPC (112 aa)).

It belongs to the AB hydrolase superfamily. Lipase family. As to quaternary structure, forms a 1:1 stoichiometric complex with (pro)colipase/CLPS.

It localises to the secreted. It catalyses the reaction a triacylglycerol + H2O = a diacylglycerol + a fatty acid + H(+). It carries out the reaction 1,2,3-tributanoylglycerol + H2O = dibutanoylglycerol + butanoate + H(+). The catalysed reaction is 1,2,3-tri-(9Z-octadecenoyl)-glycerol + H2O = di-(9Z)-octadecenoylglycerol + (9Z)-octadecenoate + H(+). The enzyme catalyses all-trans-retinyl hexadecanoate + H2O = all-trans-retinol + hexadecanoate + H(+). It catalyses the reaction 1,2-di-(9Z-octadecenoyl)-glycerol + H2O = (9Z-octadecenoyl)-glycerol + (9Z)-octadecenoate + H(+). With respect to regulation, inhibited by bile salts, is reactivated by (pro)colipase/CLPS. In terms of biological role, plays an important role in fat metabolism. It preferentially splits the esters of long-chain fatty acids at positions 1 and 3, producing mainly 2-monoacylglycerol and free fatty acids, and shows considerably higher activity against insoluble emulsified substrates than against soluble ones. The chain is Pancreatic triacylglycerol lipase (PNLIP) from Sus scrofa (Pig).